Reading from the N-terminus, the 737-residue chain is tRNA (guanine(27)-N(2))-dimethyltransferase (737 aa).

A compositionally biased stretch (acidic residues) spans 1 to 10 (MENMAEEELL). The interval 1–65 (MENMAEEELL…ASAPVPAPAL (65 aa)) is disordered. Low complexity predominate over residues 17–49 (VVQVPVPTPTPDSARVPAPAPDSAPVSASTPAP). T24 bears the Phosphothreonine mark. Pro residues predominate over residues 50 to 62 (ASAPTPASAPVPA). Position 72 is a phosphoserine (S72). The short motif at 141–145 (HKLHR) is the Nucleolar localization signal element. The segment at 190–212 (YHCIICSATITRRTDMLGHVRRH) adopts a C2H2-type zinc-finger fold. In terms of domain architecture, Trm1 methyltransferase spans 233–692 (EILKEADTDV…APLMQFKSIL (460 aa)). Residues R266, D313, D363, and A364 each coordinate S-adenosyl-L-methionine. 4 residues coordinate Zn(2+): C494, C497, C519, and C521. K589 participates in a covalent cross-link: Glycyl lysine isopeptide (Lys-Gly) (interchain with G-Cter in SUMO2). The residue at position 616 (S616) is a Phosphoserine.

Belongs to the class I-like SAM-binding methyltransferase superfamily. Trm1 family.

Its subcellular location is the nucleus. The protein resides in the nucleolus. It catalyses the reaction guanosine(27) in tRNA(Tyr) + 2 S-adenosyl-L-methionine = N(2)-dimethylguanosine(27) in tRNA(Tyr) + 2 S-adenosyl-L-homocysteine + 2 H(+). In terms of biological role, specifically dimethylates a single guanine residue at position 27 of tRNA(Tyr) using S-adenosyl-L-methionine as donor of the methyl groups. Dimethylation at position 27 of tRNA(Tyr) is required for efficient translation of tyrosine codons. Also required to maintain 3-(3-amino-3-carboxypropyl)uridine (acp3U) in the D-loop of several cytoplasmic tRNAs. The polypeptide is tRNA (guanine(27)-N(2))-dimethyltransferase (TRMT1L) (Bos taurus (Bovine)).